Reading from the N-terminus, the 283-residue chain is Thymidylate synthase (283 aa).

Position 22 (arginine 22) interacts with dUMP. Catalysis depends on cysteine 160, which acts as the Nucleophile. DUMP is bound by residues 180 to 183, asparagine 191, and 221 to 223; these read RSCD and HIY. Aspartate 183 provides a ligand contact to (6R)-5,10-methylene-5,6,7,8-tetrahydrofolate. A (6R)-5,10-methylene-5,6,7,8-tetrahydrofolate-binding site is contributed by serine 282.

The protein belongs to the thymidylate synthase family. Bacterial-type ThyA subfamily. Homodimer.

The protein resides in the cytoplasm. The catalysed reaction is dUMP + (6R)-5,10-methylene-5,6,7,8-tetrahydrofolate = 7,8-dihydrofolate + dTMP. It functions in the pathway pyrimidine metabolism; dTTP biosynthesis. Catalyzes the reductive methylation of 2'-deoxyuridine-5'-monophosphate (dUMP) to 2'-deoxythymidine-5'-monophosphate (dTMP) while utilizing 5,10-methylenetetrahydrofolate (mTHF) as the methyl donor and reductant in the reaction, yielding dihydrofolate (DHF) as a by-product. This enzymatic reaction provides an intracellular de novo source of dTMP, an essential precursor for DNA biosynthesis. In Haemophilus influenzae (strain ATCC 51907 / DSM 11121 / KW20 / Rd), this protein is Thymidylate synthase.